The chain runs to 399 residues: MARPLKTIALEPIKQPERFTKEDFLSQEDITQALDLALKQVRLNMDYFKEDFPTPATKDNQYAIMDNTEWTNAFWTGCLWLAYEYSGDDAIKALAQANDLSFLDRVTRDIELDHHDLGFLYTPSCMAEWKLLKTPESREAALKAADKLVQRYQDKGGFIQAWGELGKKEDYRLIIDCLLNIQLLFFASQETGDNRYRDMAINHFYASANHVIRDDASAYHTFYFDPETGDPVKGVTRQGYSDDSAWARGQAWGIYGIPLTYRFLKEPELIQLFKGMTHYFLNRLPKDQVSYWDLIFGDGSEQSRDSSATAIAVCGIHEMLKTLPDHDPDKKTYEAAMHSMLRALIKDYANKDLKPGAPLLLHGVYSWHSGKGVDEGNIWGDYYYLEALLRFYKDWNPYW.

The active-site Nucleophile is the Asp-116. Substrate is bound by residues Asp-116, Asp-176, Gly-234, Thr-236, Arg-248, Trp-252, Ser-366, and Ser-369. The active-site Proton donor is Asp-176.

This sequence belongs to the glycosyl hydrolase 88 family. As to quaternary structure, monomer.

The catalysed reaction is beta-D-4-deoxy-Delta(4)-GlcpA-(1-&gt;3)-beta-D-GalpNAc6S + H2O = N-acetyl-beta-D-galactosamine 6-sulfate + 5-dehydro-4-deoxy-D-glucuronate. In terms of biological role, catalyzes the hydrolysis of unsaturated hyaluronate and chondroitin disaccharides. Also degrades unsaturated heparin disaccharides. Releases 4-deoxy-4,5-didehydro D-glucuronic acid or 4-deoxy-4,5-didehydro L-iduronic acid from chondroitin disaccharides, hyaluronan disaccharides and heparin disaccharides and cleaves both glycosidic (1-&gt;3) and (1-&gt;4) bonds. Prefers sulfated glycosaminoglycans compared to unsulfated glycosaminoglycans. Probably required for mammalian cells invasion through the degradation of extracellular sulfated glycosaminoglycans such as chondroitin and hyaluronan. This Streptococcus pyogenes serotype M1 protein is Unsaturated chondroitin disaccharide hydrolase (ugl).